Consider the following 158-residue polypeptide: NAD(P)H-quinone oxidoreductase subunit J, chloroplastic (158 aa).

Belongs to the complex I 30 kDa subunit family. NDH is composed of at least 16 different subunits, 5 of which are encoded in the nucleus.

It localises to the plastid. It is found in the chloroplast thylakoid membrane. It carries out the reaction a plastoquinone + NADH + (n+1) H(+)(in) = a plastoquinol + NAD(+) + n H(+)(out). The enzyme catalyses a plastoquinone + NADPH + (n+1) H(+)(in) = a plastoquinol + NADP(+) + n H(+)(out). NDH shuttles electrons from NAD(P)H:plastoquinone, via FMN and iron-sulfur (Fe-S) centers, to quinones in the photosynthetic chain and possibly in a chloroplast respiratory chain. The immediate electron acceptor for the enzyme in this species is believed to be plastoquinone. Couples the redox reaction to proton translocation, and thus conserves the redox energy in a proton gradient. The chain is NAD(P)H-quinone oxidoreductase subunit J, chloroplastic from Gossypium barbadense (Sea Island cotton).